Reading from the N-terminus, the 401-residue chain is 8-amino-7-oxononanoate synthase (401 aa).

A substrate-binding site is contributed by Arg24. Residue 111–112 (GF) coordinates pyridoxal 5'-phosphate. A substrate-binding site is contributed by His137. Residues Ser183, His211, and Thr240 each coordinate pyridoxal 5'-phosphate. Position 243 is an N6-(pyridoxal phosphate)lysine (Lys243). Thr357 lines the substrate pocket.

It belongs to the class-II pyridoxal-phosphate-dependent aminotransferase family. BioF subfamily. As to quaternary structure, homodimer. The cofactor is pyridoxal 5'-phosphate.

The catalysed reaction is 6-carboxyhexanoyl-[ACP] + L-alanine + H(+) = (8S)-8-amino-7-oxononanoate + holo-[ACP] + CO2. The protein operates within cofactor biosynthesis; biotin biosynthesis. Catalyzes the decarboxylative condensation of pimeloyl-[acyl-carrier protein] and L-alanine to produce 8-amino-7-oxononanoate (AON), [acyl-carrier protein], and carbon dioxide. The polypeptide is 8-amino-7-oxononanoate synthase (Xanthomonas campestris pv. campestris (strain 8004)).